Here is a 155-residue protein sequence, read N- to C-terminus: Small ribosomal subunit protein uS7 (155 aa).

The protein belongs to the universal ribosomal protein uS7 family. In terms of assembly, part of the 30S ribosomal subunit. Contacts proteins S9 and S11.

Functionally, one of the primary rRNA binding proteins, it binds directly to 16S rRNA where it nucleates assembly of the head domain of the 30S subunit. Is located at the subunit interface close to the decoding center, probably blocks exit of the E-site tRNA. The protein is Small ribosomal subunit protein uS7 of Chlorobium phaeobacteroides (strain DSM 266 / SMG 266 / 2430).